Reading from the N-terminus, the 403-residue chain is Putative glutamate--cysteine ligase 2 (403 aa).

The segment at 370 to 403 is disordered; sequence ESAAQRRAPQAARRRIRASSEPLGPMSMWPERLH.

This sequence belongs to the glutamate--cysteine ligase type 2 family. YbdK subfamily.

It carries out the reaction L-cysteine + L-glutamate + ATP = gamma-L-glutamyl-L-cysteine + ADP + phosphate + H(+). ATP-dependent carboxylate-amine ligase which exhibits weak glutamate--cysteine ligase activity. The chain is Putative glutamate--cysteine ligase 2 from Bordetella avium (strain 197N).